We begin with the raw amino-acid sequence, 659 residues long: Exocyst complex component 5 (659 aa).

Residues 1–58 are a coiled coil; that stretch reads MRFEEEIGSLQMLCDQFQNKINTLEKQMNEEKKDYVQKLHRLHEKNGEAIDKMKQLDH.

The protein belongs to the SEC10 family. As to quaternary structure, the exocyst complex is composed of sec-3/exoc1, sec-5/exoc2, sec-6/exoc3, sec-8/exoc4, sec-10/exoc5, sec-15/exoc6, exo-70/exoc7 and exo-84/exoc8.

Its function is as follows. Component of the exocyst complex involved in the docking of exocytic vesicles with fusion sites on the plasma membrane. The protein is Exocyst complex component 5 (sec-10) of Caenorhabditis elegans.